The primary structure comprises 194 residues: Glycerol-3-phosphate acyltransferase (194 aa).

Transmembrane regions (helical) follow at residues 2-22 (LIEI…TGLL), 51-71 (SVGI…VLAA), 80-100 (WIAL…FLGF), 112-132 (VFLG…VAVV), and 155-175 (FLSG…LVIW).

Belongs to the PlsY family. In terms of assembly, probably interacts with PlsX.

Its subcellular location is the cell inner membrane. It catalyses the reaction an acyl phosphate + sn-glycerol 3-phosphate = a 1-acyl-sn-glycero-3-phosphate + phosphate. Its pathway is lipid metabolism; phospholipid metabolism. Its function is as follows. Catalyzes the transfer of an acyl group from acyl-phosphate (acyl-PO(4)) to glycerol-3-phosphate (G3P) to form lysophosphatidic acid (LPA). This enzyme utilizes acyl-phosphate as fatty acyl donor, but not acyl-CoA or acyl-ACP. The polypeptide is Glycerol-3-phosphate acyltransferase (Geobacter metallireducens (strain ATCC 53774 / DSM 7210 / GS-15)).